A 193-amino-acid chain; its full sequence is Flagellin B1 (193 aa).

Residues 1-12 (MFEFITDEDERG) constitute a propeptide that is removed on maturation.

Belongs to the archaeal flagellin family. Glycosylated.

The protein localises to the archaeal flagellum. Its function is as follows. Flagellin is the subunit protein which polymerizes to form the filaments of archaeal flagella. This Halobacterium salinarum (strain ATCC 700922 / JCM 11081 / NRC-1) (Halobacterium halobium) protein is Flagellin B1 (flaB1).